The chain runs to 334 residues: Probable 3-hydroxyisobutyrate dehydrogenase-like 1, mitochondrial (334 aa).

The N-terminal 23 residues, 1-23 (MPLLLRRFPSPSVVSSFFLRRSM), are a transit peptide targeting the mitochondrion. An N-acetylalanine modification is found at Ala-24. Residues 38–67 (TKIGWIGTGVMGRSMCGHLIKAGYTVTVFN) and Thr-133 each bind NAD(+). Lys-207 is a catalytic residue. Lys-275 serves as a coordination point for NAD(+).

This sequence belongs to the HIBADH-related family. 3-hydroxyisobutyrate dehydrogenase subfamily.

Its subcellular location is the mitochondrion. It catalyses the reaction 3-hydroxy-2-methylpropanoate + NAD(+) = 2-methyl-3-oxopropanoate + NADH + H(+). It functions in the pathway amino-acid degradation; L-valine degradation. In Arabidopsis thaliana (Mouse-ear cress), this protein is Probable 3-hydroxyisobutyrate dehydrogenase-like 1, mitochondrial.